Reading from the N-terminus, the 113-residue chain is MHEMAVCESLLSAMEEAAKAQNFSRVTRVRLAIGRFAGIEVEALRFGFDVVMRGSLAEGAELVVLEEDGSAWCFDCCETVALSHRLASCPKCGGERLVPNGGTDMKIKDLEVL.

His2 contacts Ni(2+). Zn(2+) contacts are provided by Cys73, Cys76, Cys89, and Cys92.

Belongs to the HypA/HybF family.

Functionally, involved in the maturation of [NiFe] hydrogenases. Required for nickel insertion into the metal center of the hydrogenase. The polypeptide is Hydrogenase maturation factor HypA (Xanthobacter autotrophicus (strain ATCC BAA-1158 / Py2)).